We begin with the raw amino-acid sequence, 72 residues long: Phosphonoacetate hydrolase (72 aa).

As to quaternary structure, monomer. Requires Unlike bacterial phosphonoacetate hydrolase, does not require zinc as a cofactor. as cofactor.

The catalysed reaction is phosphonoacetate + H2O = acetate + phosphate + H(+). Its activity is regulated as follows. Unaffected by EDTA or Ca(2+), Co(2+), Cu(2+), Mg(2+), Mn(2+), Ni(2+) and Zn(2+). In Penicillium oxalicum, this protein is Phosphonoacetate hydrolase.